The sequence spans 107 residues: Small ribosomal subunit protein bS18c (107 aa).

Residues 85 to 95 (KKAQRFKRRQS) are compositionally biased toward basic residues. The disordered stretch occupies residues 85-107 (KKAQRFKRRQSTARTVGLRTRNK).

This sequence belongs to the bacterial ribosomal protein bS18 family. In terms of assembly, part of the 30S ribosomal subunit.

It is found in the plastid. Its subcellular location is the chloroplast. The polypeptide is Small ribosomal subunit protein bS18c (Oenothera argillicola (Appalachian evening primrose)).